Consider the following 151-residue polypeptide: Lipoprotein signal peptidase (151 aa).

2 helical membrane passes run 61 to 81 (GSQW…IWIG) and 88 to 107 (SRWQ…GNGI). Residues D117 and D133 contribute to the active site. The helical transmembrane segment at 128-148 (VFNLADVAINLAVLCLLIEAI) threads the bilayer.

This sequence belongs to the peptidase A8 family.

Its subcellular location is the cell inner membrane. It carries out the reaction Release of signal peptides from bacterial membrane prolipoproteins. Hydrolyzes -Xaa-Yaa-Zaa-|-(S,diacylglyceryl)Cys-, in which Xaa is hydrophobic (preferably Leu), and Yaa (Ala or Ser) and Zaa (Gly or Ala) have small, neutral side chains.. It functions in the pathway protein modification; lipoprotein biosynthesis (signal peptide cleavage). Functionally, this protein specifically catalyzes the removal of signal peptides from prolipoproteins. The polypeptide is Lipoprotein signal peptidase (Synechococcus sp. (strain RCC307)).